A 121-amino-acid polypeptide reads, in one-letter code: Autophagy-related protein 8f (121 aa).

A lipid anchor (Phosphatidylethanolamine amidated glycine) is attached at G117. The propeptide at 118-121 is removed in mature form; it reads FGSP.

The protein belongs to the ATG8 family. In terms of assembly, interacts with ATG4. Interacts with NBR1. Interacts with ATI1 and ATI2. Interacts with SH3P2. In terms of processing, the C-terminal 4 residues are removed by ATG4 to expose Gly-117 at the C-terminus. This Gly-117 forms then a thioester bond with the 'Cys-558' of ATG7 (E1-like activating enzyme) before being transferred to the 'Cys-258' of ATG3 (the specific E2 conjugating enzyme), in order to be finally amidated with phosphatidylethanolamine. This lipid modification anchors ATG8 to autophagosomes. In terms of tissue distribution, constitutively expressed.

The protein localises to the cytoplasmic vesicle. It is found in the autophagosome membrane. The protein resides in the vacuole membrane. Its subcellular location is the cytoplasm. It localises to the cytoskeleton. In terms of biological role, ubiquitin-like modifier involved in autophagosomes formation. May mediate the delivery of the autophagosomes to the vacuole via the microtubule cytoskeleton. The chain is Autophagy-related protein 8f (ATG8F) from Arabidopsis thaliana (Mouse-ear cress).